Consider the following 976-residue polypeptide: Synaptonemal complex protein 1 (976 aa).

The Mediates head to head self-assembly of N-terminal ends motif lies at 101–111 (GLSRVYSKLYK). The Nuclear localization signal signature appears at 117-120 (KKWK). Residues 206-362 (ETRQVYMDLN…CQLTEEKETQ (157 aa)) are interaction with SYCE3. 4 coiled-coil regions span residues 211–316 (YMDL…SIEK), 391–439 (LRTE…LKKV), 499–685 (VKDL…VEKA), and 739–798 (EQEQ…KTQT). The interval 676 to 770 (ENLLEEVEKA…LSVKKQLEIE (95 aa)) is required for pH-induced assembly of C-terminal ends into antiparallel tetramers. A Nuclear localization signal motif is present at residues 679 to 682 (LEEV). The DNA-binding stretch occupies residues 784-976 (NTATLKEKKD…KLKEAEKLFV (193 aa)). The Nuclear localization signal signature appears at 880–883 (KKRK).

As to quaternary structure, structural component of synaptonemal complexes. Homotetramer that consists of an N-terminal four-helical bundle that bifurcates into two elongated C-terminal dimeric coiled coils. This tetrameric building block potentially self-assembles into a supramolecular zipper-like lattice to mediate meiotic chromosome synapsis. Self-assembly is likely initiated by local proton density at chromosome axis, which is predicted to trigger antiparallel back to back assembly of adjacent C-terminal ends into tetrameric structures that anchor to chromosomal DNA. Then the N-terminal ends are predicted to undergo cooperative antiparallel head to head assembly at the midline of synaptonemal complexes central element to form a zipper-like lattice between properly aligned homologous chromosomes. The nascent synapsis generated by SYCP1 is stabilized through interaction with central element proteins SYCE1 and SYCE2. Interacts (via tetrameric core) with SYCE3; the interaction remodels SYCP1 homotetramers to 2:1 heterotrimers with SYCE3. SYCP1/SYCE3 heterotrimers form lattice assemblies as part of the mature synaptonemal complex via both lateral and head-to-head interactions. Forms a complex with EWSR1, PRDM9, SYCP3 and REC8; complex formation is dependent of phosphorylated form of REC8 and requires PRDM9 bound to hotspot DNA; EWSR1 joins PRDM9 with the chromosomal axis through REC8. Interacts with SPO16. In terms of tissue distribution, testis.

The protein localises to the nucleus. It is found in the chromosome. Its subcellular location is the centromere. Its function is as follows. Major component of the transverse filaments of synaptonemal complexes, formed between homologous chromosomes during meiotic prophase. Required for normal assembly of the central element of the synaptonemal complexes. Required for normal centromere pairing during meiosis. Required for normal meiotic chromosome synapsis during oocyte and spermatocyte development and for normal male and female fertility. This Homo sapiens (Human) protein is Synaptonemal complex protein 1.